A 206-amino-acid chain; its full sequence is Endoribonuclease YbeY (206 aa).

The disordered stretch occupies residues M1–H20. Positions 168, 172, and 178 each coordinate Zn(2+).

It belongs to the endoribonuclease YbeY family. It depends on Zn(2+) as a cofactor.

The protein resides in the cytoplasm. Functionally, single strand-specific metallo-endoribonuclease involved in late-stage 70S ribosome quality control and in maturation of the 3' terminus of the 16S rRNA. This chain is Endoribonuclease YbeY, found in Psychrobacter arcticus (strain DSM 17307 / VKM B-2377 / 273-4).